The following is a 217-amino-acid chain: Casparian strip membrane protein 6 (217 aa).

At 1–57 (MEEAKHIEAVEAKQIEAEEAQRIKAGEAKQIEAGETSRSSRKVITFEPKLVINKGIS) the chain is on the cytoplasmic side. Residues 58–78 (VLGFVLRLFAVFGTIGSALAM) traverse the membrane as a helical segment. Over 79 to 103 (GTTHESVVSLSQLVLLKVKYSDLPT) the chain is Extracellular. The chain crosses the membrane as a helical span at residues 104–124 (LMFFVVANAIAGGYLVLSLPV). Residues 125–138 (SIFHIFSTKAKTSR) lie on the Cytoplasmic side of the membrane. Residues 139 to 159 (IILLVIDTVMLALVSSGASAA) traverse the membrane as a helical segment. At 160-191 (TATVYLAHEGNTTANWPPICQQFDGFCERISG) the chain is on the extracellular side. Residue asparagine 170 is glycosylated (N-linked (GlcNAc...) asparagine). A helical transmembrane segment spans residues 192 to 212 (SLIGSFCAVILLMLIVINSAI). Topologically, residues 213-217 (SLSRH) are cytoplasmic.

It belongs to the Casparian strip membrane proteins (CASP) family. In terms of assembly, homodimer and heterodimers.

The protein localises to the cell membrane. Regulates membrane-cell wall junctions and localized cell wall deposition. Required for establishment of the Casparian strip membrane domain (CSD) and the subsequent formation of Casparian strips, a cell wall modification of the root endodermis that determines an apoplastic barrier between the intraorganismal apoplasm and the extraorganismal apoplasm and prevents lateral diffusion. In Arabidopsis lyrata subsp. lyrata (Lyre-leaved rock-cress), this protein is Casparian strip membrane protein 6.